The following is a 458-amino-acid chain: SH2 domain-containing protein 7 (458 aa).

Residues 51 to 142 (WFHGFITRKQ…PFGETLAAAC (92 aa)) enclose the SH2 domain. 2 disordered regions span residues 204–235 (RSVS…SPAG) and 267–326 (AGSL…TLGS). A compositionally biased stretch (basic and acidic residues) spans 278–288 (PSGKLSDEDQN). Over residues 304 to 326 (QGSTMPYTSLGFSLPPSSETLGS) the composition is skewed to polar residues.

In Mus musculus (Mouse), this protein is SH2 domain-containing protein 7 (Sh2d7).